The sequence spans 141 residues: Nucleoside diphosphate kinase (141 aa).

Residues lysine 11, phenylalanine 59, arginine 87, threonine 93, arginine 104, and asparagine 114 each coordinate ATP. Catalysis depends on histidine 117, which acts as the Pros-phosphohistidine intermediate.

This sequence belongs to the NDK family. As to quaternary structure, homotetramer. Mg(2+) serves as cofactor.

The protein resides in the cytoplasm. The catalysed reaction is a 2'-deoxyribonucleoside 5'-diphosphate + ATP = a 2'-deoxyribonucleoside 5'-triphosphate + ADP. It carries out the reaction a ribonucleoside 5'-diphosphate + ATP = a ribonucleoside 5'-triphosphate + ADP. Functionally, major role in the synthesis of nucleoside triphosphates other than ATP. The ATP gamma phosphate is transferred to the NDP beta phosphate via a ping-pong mechanism, using a phosphorylated active-site intermediate. The protein is Nucleoside diphosphate kinase of Histophilus somni (strain 129Pt) (Haemophilus somnus).